Here is a 160-residue protein sequence, read N- to C-terminus: Phosphopantetheine adenylyltransferase (160 aa).

Position 10 (Thr10) interacts with substrate. Residues 10–11 and His18 contribute to the ATP site; that span reads TF. Substrate-binding residues include Lys42, Leu74, and Arg88. ATP contacts are provided by residues 89–91, Glu99, and 124–130; these read GLR and NSFISST.

It belongs to the bacterial CoaD family. As to quaternary structure, homohexamer. It depends on Mg(2+) as a cofactor.

The protein localises to the cytoplasm. It carries out the reaction (R)-4'-phosphopantetheine + ATP + H(+) = 3'-dephospho-CoA + diphosphate. It participates in cofactor biosynthesis; coenzyme A biosynthesis; CoA from (R)-pantothenate: step 4/5. Its function is as follows. Reversibly transfers an adenylyl group from ATP to 4'-phosphopantetheine, yielding dephospho-CoA (dPCoA) and pyrophosphate. This chain is Phosphopantetheine adenylyltransferase, found in Photobacterium damsela subsp. piscicida (Pasteurella piscicida).